The sequence spans 542 residues: 4-coumarate--CoA ligase-like 5 (542 aa).

ATP contacts are provided by S204, S205, G206, T207, T208, and K212. F262 is a (E)-4-coumaroyl-AMP binding site. R282 provides a ligand contact to CoA. The tract at residues 284-353 is SBD1; it reads DFIAALRAIE…SVFPNVELVQ (70 aa). Residues G331, Q353, G354, and T358 each contribute to the (E)-4-coumaroyl-AMP site. Q353, G354, T358, D418, and R433 together coordinate ATP. Positions 354 to 397 are SBD2; the sequence is GYGLTESSGAVAATVGPEESKAYGSVGKLGSHLQAKIVDPSTGY. (E)-4-coumaroyl-AMP contacts are provided by K435 and K439. 2 residues coordinate CoA: K441 and G442. K524 is an ATP binding site.

Belongs to the ATP-dependent AMP-binding enzyme family. Mg(2+) serves as cofactor.

The catalysed reaction is (E)-4-coumarate + ATP + CoA = (E)-4-coumaroyl-CoA + AMP + diphosphate. The enzyme catalyses (E)-4-coumarate + ATP + H(+) = (E)-4-coumaroyl-AMP + diphosphate. It carries out the reaction (E)-4-coumaroyl-AMP + CoA = (E)-4-coumaroyl-CoA + AMP + H(+). In terms of biological role, carboxylate--CoA ligase that may use 4-coumarate as substrate. Follows a two-step reaction mechanism, wherein the carboxylate substrate first undergoes adenylation by ATP, followed by a thioesterification in the presence of CoA to yield the final CoA thioester. This is 4-coumarate--CoA ligase-like 5 (4CLL5) from Oryza sativa subsp. japonica (Rice).